The chain runs to 575 residues: Phosphoenolpyruvate-protein phosphotransferase (575 aa).

His-191 acts as the Tele-phosphohistidine intermediate in catalysis. Residues Arg-298 and Arg-334 each coordinate phosphoenolpyruvate. Residues Glu-435 and Asp-459 each coordinate Mg(2+). Phosphoenolpyruvate contacts are provided by residues Asn-458 to Asp-459 and Arg-469. The active-site Proton donor is the Cys-506.

The protein belongs to the PEP-utilizing enzyme family. As to quaternary structure, homodimer. Mg(2+) serves as cofactor.

The protein resides in the cytoplasm. The catalysed reaction is L-histidyl-[protein] + phosphoenolpyruvate = N(pros)-phospho-L-histidyl-[protein] + pyruvate. Its function is as follows. General (non sugar-specific) component of the phosphoenolpyruvate-dependent sugar phosphotransferase system (sugar PTS). This major carbohydrate active-transport system catalyzes the phosphorylation of incoming sugar substrates concomitantly with their translocation across the cell membrane. Enzyme I transfers the phosphoryl group from phosphoenolpyruvate (PEP) to the phosphoryl carrier protein (HPr). The polypeptide is Phosphoenolpyruvate-protein phosphotransferase (ptsI) (Enterococcus faecalis (strain ATCC 700802 / V583)).